The primary structure comprises 283 residues: Polyamine aminopropyltransferase (283 aa).

One can recognise a PABS domain in the interval 5-241 (NNWYIEHFER…GWWSVTMARK (237 aa)). Gln35 is a binding site for S-methyl-5'-thioadenosine. Spermidine is bound by residues His66 and Asp90. Residues Asp110 and 141-142 (DG) contribute to the S-methyl-5'-thioadenosine site. The active-site Proton acceptor is the Asp160. Position 160-163 (160-163 (DSTD)) interacts with spermidine. Position 167 (Pro167) interacts with S-methyl-5'-thioadenosine.

This sequence belongs to the spermidine/spermine synthase family. In terms of assembly, homodimer or homotetramer.

The protein resides in the cytoplasm. The enzyme catalyses S-adenosyl 3-(methylsulfanyl)propylamine + putrescine = S-methyl-5'-thioadenosine + spermidine + H(+). It participates in amine and polyamine biosynthesis; spermidine biosynthesis; spermidine from putrescine: step 1/1. Its function is as follows. Catalyzes the irreversible transfer of a propylamine group from the amino donor S-adenosylmethioninamine (decarboxy-AdoMet) to putrescine (1,4-diaminobutane) to yield spermidine. In Stenotrophomonas maltophilia (strain K279a), this protein is Polyamine aminopropyltransferase.